A 428-amino-acid polypeptide reads, in one-letter code: Cytochrome c biogenesis protein CcsB (428 aa).

3 helical membrane passes run 14–34, 72–92, and 162–182; these read LRFAILLIIFIAISSGVGTFI, SNWFLFSLILLCISLAACSFR, and LGPIIVHIGLIILLIGSAYGN.

This sequence belongs to the Ccs1/CcsB family. As to quaternary structure, may interact with CcsA.

The protein localises to the cellular thylakoid membrane. Its function is as follows. Required during biogenesis of c-type cytochromes (cytochrome c6 and cytochrome f) at the step of heme attachment. This is Cytochrome c biogenesis protein CcsB from Prochlorococcus marinus subsp. pastoris (strain CCMP1986 / NIES-2087 / MED4).